The primary structure comprises 437 residues: Matrix remodeling-associated protein 8 (437 aa).

Residues 1 to 22 (MEQLAKLLLWQLLLQQSSVVYL) form the signal peptide. Over 23 to 339 (YSVPADASNP…PESRIHFFQQ (317 aa)) the chain is Extracellular. Ig-like V-type domains follow at residues 32–159 (PDSV…LDIT) and 167–294 (EYWD…VFVT). 4 N-linked (GlcNAc...) asparagine glycosylation sites follow: N41, N121, N246, and N304. 2 cysteine pairs are disulfide-bonded: C54-C139 and C188-C274. Residues 340-360 (LGYVLATLLLFVVLLIIVVFI) form a helical membrane-spanning segment. At 361-437 (TRKRRQRGYE…DKDFRKEYCK (77 aa)) the chain is on the cytoplasmic side.

In terms of assembly, homodimer in cis. Does not appear to form trans-homodimers.

It is found in the cell membrane. Transmembrane protein which can modulate activity of various signaling pathways, probably via binding to integrin ITGAV:ITGB3. Mediates heterophilic cell-cell interactions in vitro. The chain is Matrix remodeling-associated protein 8 (MXRA8) from Gallus gallus (Chicken).